Reading from the N-terminus, the 335-residue chain is NADH-ubiquinone oxidoreductase chain 2 (335 aa).

Transmembrane regions (helical) follow at residues 7–27 (PTMALAMSTLIMSTLMAVSSA), 28–48 (NWMFLWGAMELNLLSFIPIMM), 58–78 (GAVKYFLAQALGSALLLMSST), 81–101 (WMTFSMISNFMPLTLMAAIML), 110–130 (FWYPSVMASISWVSCLILSSW), 147–167 (NMNFMLSMAAMNALLGGVIGM), 174–194 (TIMAYSSIGHIGWMMSLAAVY), 200–220 (IMYFVVYCILITPLFMTMGYL), 240–260 (MALLMVLLSLGGLPPFTGFMP), 274–294 (IILLILIAGSIMNLFFYLNII), and 315–335 (SLKFVIPICTLSLGLSPFIML).

This sequence belongs to the complex I subunit 2 family.

Its subcellular location is the mitochondrion inner membrane. The enzyme catalyses a ubiquinone + NADH + 5 H(+)(in) = a ubiquinol + NAD(+) + 4 H(+)(out). Its function is as follows. Core subunit of the mitochondrial membrane respiratory chain NADH dehydrogenase (Complex I) that is believed to belong to the minimal assembly required for catalysis. Complex I functions in the transfer of electrons from NADH to the respiratory chain. The immediate electron acceptor for the enzyme is believed to be ubiquinone. The polypeptide is NADH-ubiquinone oxidoreductase chain 2 (ND2) (Lumbricus terrestris (Common earthworm)).